The primary structure comprises 84 residues: Delta-conotoxin-like MVIB (84 aa).

The signal sequence occupies residues 1–22; sequence MKLTCVMIVAVLFLTAWTFVTA. A propeptide spanning residues 23–51 is cleaved from the precursor; the sequence is DDSRYGLKDLFPKERHEMKNPEASKLNQR. Disulfide bonds link C54–C69, C61–C73, and C68–C77. P65 is subject to 4-hydroxyproline. At S83 the chain carries Serine amide.

Belongs to the conotoxin O1 superfamily. Expressed by the venom duct.

It is found in the secreted. Delta-conotoxins bind to site 6 of voltage-gated sodium channels (Nav) and inhibit the inactivation process. In Conus magus (Magical cone), this protein is Delta-conotoxin-like MVIB.